Consider the following 156-residue polypeptide: Small ribosomal subunit protein uS7 (156 aa).

This sequence belongs to the universal ribosomal protein uS7 family. Part of the 30S ribosomal subunit. Contacts proteins S9 and S11.

In terms of biological role, one of the primary rRNA binding proteins, it binds directly to 16S rRNA where it nucleates assembly of the head domain of the 30S subunit. Is located at the subunit interface close to the decoding center, probably blocks exit of the E-site tRNA. The chain is Small ribosomal subunit protein uS7 from Syntrophus aciditrophicus (strain SB).